The chain runs to 492 residues: GDP-Man:Man(3)GlcNAc(2)-PP-Dol alpha-1,2-mannosyltransferase (492 aa).

At 1 to 19 (MAAGERSWCLCKLLRFFYS) the chain is on the lumenal side. Residues 20–40 (LFFPGLIVCGTLCVCLVIVLW) form a helical membrane-spanning segment. Residues 41–233 (GIRLLLQRKK…TRNPFLSKVK (193 aa)) lie on the Cytoplasmic side of the membrane. The segment at residues 234 to 254 (LIYYYLFAFIYGLVGSCSDVV) is an intramembrane region (helical). The Cytoplasmic portion of the chain corresponds to 255-399 (MVNSSWTLNH…IGLHTMWNEH (145 aa)). An intramembrane region (helical) is located at residues 400–420 (FGIGVVECMAAGTIILAHNSG). The Cytoplasmic segment spans residues 421–492 (GPKLDIVVPH…FLSSVEKLFK (72 aa)).

The protein belongs to the glycosyltransferase group 1 family. Glycosyltransferase 4 subfamily.

It is found in the endoplasmic reticulum membrane. It carries out the reaction an alpha-D-Man-(1-&gt;3)-[alpha-D-Man-(1-&gt;6)]-beta-D-Man-(1-&gt;4)-beta-D-GlcNAc-(1-&gt;4)-alpha-D-GlcNAc-diphospho-di-trans,poly-cis-dolichol + 2 GDP-alpha-D-mannose = an alpha-D-Man-(1-&gt;2)-alpha-D-Man-(1-&gt;2)-alpha-D-Man-(1-&gt;3)-[alpha-D-Man-(1-&gt;6)]-beta-D-Man-(1-&gt;4)-beta-D-GlcNAc-(1-&gt;4)-alpha-D-GlcNAc-diphospho-di-trans,poly-cis-dolichol + 2 GDP + 2 H(+). It participates in protein modification; protein glycosylation. GDP-Man:Man(3)GlcNAc(2)-PP-Dol alpha-1,2-mannosyltransferase that operates in the biosynthetic pathway of dolichol-linked oligosaccharides, the glycan precursors employed in protein asparagine (N)-glycosylation. The assembly of dolichol-linked oligosaccharides begins on the cytosolic side of the endoplasmic reticulum membrane and finishes in its lumen. The sequential addition of sugars to dolichol pyrophosphate produces dolichol-linked oligosaccharides containing fourteen sugars, including two GlcNAcs, nine mannoses and three glucoses. Once assembled, the oligosaccharide is transferred from the lipid to nascent proteins by oligosaccharyltransferases. Catalyzes, on the cytoplasmic face of the endoplasmic reticulum, the addition of the fourth and fifth mannose residues to the dolichol-linked oligosaccharide chain, to produce Man(5)GlcNAc(2)-PP-dolichol core oligosaccharide. Man(5)GlcNAc(2)-PP-dolichol is a substrate for ALG3, the following enzyme in the biosynthetic pathway. The polypeptide is GDP-Man:Man(3)GlcNAc(2)-PP-Dol alpha-1,2-mannosyltransferase (Homo sapiens (Human)).